Here is a 571-residue protein sequence, read N- to C-terminus: Urease subunit alpha (571 aa).

The region spanning 133 to 571 (GGIDTHVHFI…LPLTQRYFLF (439 aa)) is the Urease domain. Ni(2+)-binding residues include H138, H140, and K221. K221 is subject to N6-carboxylysine. H223 contributes to the substrate binding site. Positions 250 and 276 each coordinate Ni(2+). H324 serves as the catalytic Proton donor. D364 contacts Ni(2+).

The protein belongs to the metallo-dependent hydrolases superfamily. Urease alpha subunit family. As to quaternary structure, heterotrimer of UreA (gamma), UreB (beta) and UreC (alpha) subunits. Three heterotrimers associate to form the active enzyme. Requires Ni cation as cofactor. Carboxylation allows a single lysine to coordinate two nickel ions.

The protein localises to the cytoplasm. It carries out the reaction urea + 2 H2O + H(+) = hydrogencarbonate + 2 NH4(+). The protein operates within nitrogen metabolism; urea degradation; CO(2) and NH(3) from urea (urease route): step 1/1. The chain is Urease subunit alpha from Staphylococcus aureus (strain MRSA252).